The chain runs to 304 residues: Aspartate carbamoyltransferase catalytic subunit (304 aa).

Residues arginine 57 and threonine 58 each coordinate carbamoyl phosphate. Residue lysine 85 coordinates L-aspartate. 3 residues coordinate carbamoyl phosphate: arginine 107, histidine 134, and glutamine 137. Positions 167 and 216 each coordinate L-aspartate. 2 residues coordinate carbamoyl phosphate: alanine 260 and proline 261.

The protein belongs to the aspartate/ornithine carbamoyltransferase superfamily. ATCase family. As to quaternary structure, heterododecamer (2C3:3R2) of six catalytic PyrB chains organized as two trimers (C3), and six regulatory PyrI chains organized as three dimers (R2).

The enzyme catalyses carbamoyl phosphate + L-aspartate = N-carbamoyl-L-aspartate + phosphate + H(+). It functions in the pathway pyrimidine metabolism; UMP biosynthesis via de novo pathway; (S)-dihydroorotate from bicarbonate: step 2/3. In terms of biological role, catalyzes the condensation of carbamoyl phosphate and aspartate to form carbamoyl aspartate and inorganic phosphate, the committed step in the de novo pyrimidine nucleotide biosynthesis pathway. This Fusobacterium nucleatum subsp. nucleatum (strain ATCC 25586 / DSM 15643 / BCRC 10681 / CIP 101130 / JCM 8532 / KCTC 2640 / LMG 13131 / VPI 4355) protein is Aspartate carbamoyltransferase catalytic subunit.